The primary structure comprises 39 residues: Fructose 5-dehydrogenase [NADP(+)] (39 aa).

The catalysed reaction is D-fructose + NADP(+) = 5-dehydro-D-fructose + NADPH + H(+). In Erwinia citreus, this protein is Fructose 5-dehydrogenase [NADP(+)].